A 263-amino-acid polypeptide reads, in one-letter code: Glutamate 5-kinase (263 aa).

ATP is bound at residue K14. Residues S52, D137, and N149 each contribute to the substrate site. Residues 169-170 and 211-217 contribute to the ATP site; these read SD and TGGIVTK.

Belongs to the glutamate 5-kinase family. In terms of assembly, homotetramer; oligomerization is not affected by L-proline feedback inhibition. Mg(2+) is required as a cofactor.

The enzyme catalyses L-glutamate + ATP = L-glutamyl 5-phosphate + ADP. Its pathway is amino-acid biosynthesis; L-proline biosynthesis; L-glutamate 5-semialdehyde from L-glutamate: step 1/2. Inhibited by L-proline as part of a negative feedback loop. Also inhibited by L-proline analogs 3,4-dehydro-L-proline, L-azetidine-2-carboxylic acid and L-4-thiazolidine carboxylic acid. Its function is as follows. Catalyzes the transfer of a phosphate group to glutamate to form L-glutamate 5-phosphate. May be important for growth and survival. This Leishmania donovani protein is Glutamate 5-kinase.